Reading from the N-terminus, the 197-residue chain is UPF0314 protein R03235 (197 aa).

The next 2 helical transmembrane spans lie at 16–36 and 152–172; these read ALWL…QHLM and LPVA…GYMV.

It belongs to the UPF0314 family.

It localises to the cell membrane. This chain is UPF0314 protein R03235, found in Rhizobium meliloti (strain 1021) (Ensifer meliloti).